The chain runs to 123 residues: DNA-directed RNA polymerase I subunit RPA12 (123 aa).

Zn(2+) contacts are provided by cysteine 17, cysteine 20, cysteine 35, cysteine 38, cysteine 84, and cysteine 87. The C4-type zinc finger occupies 17–38 (CPDCGSVLPLPGVQDAVACTRC). The TFIIS-type zinc-finger motif lies at 80–120 (VDRRCSRCGHEGMAYHTRQMRSADEGQTVFYTCTNCKFQEK). The Hairpin signature appears at 103 to 104 (DE). 2 residues coordinate Zn(2+): cysteine 112 and cysteine 115.

The protein belongs to the archaeal RpoM/eukaryotic RPA12/RPB9/RPC11 RNA polymerase family. As to quaternary structure, component of the RNA polymerase I (Pol I) complex consisting of at least 13 subunits.

The protein localises to the nucleus. It is found in the nucleolus. Functionally, core component of RNA polymerase I (Pol I), a DNA-dependent RNA polymerase which synthesizes ribosomal RNA precursors using the four ribonucleoside triphosphates as substrates. Can mediate Pol I proofreading of the nascent RNA transcript. Anchors into the Pol I active site to monitor transcription fidelity and cleave mis-incorporated 5'-ribonucleotides. In Bos taurus (Bovine), this protein is DNA-directed RNA polymerase I subunit RPA12.